A 198-amino-acid polypeptide reads, in one-letter code: dTTP/UTP pyrophosphatase (198 aa).

D72 serves as the catalytic Proton acceptor.

This sequence belongs to the Maf family. YhdE subfamily. The cofactor is a divalent metal cation.

The protein localises to the cytoplasm. The enzyme catalyses dTTP + H2O = dTMP + diphosphate + H(+). It catalyses the reaction UTP + H2O = UMP + diphosphate + H(+). Its function is as follows. Nucleoside triphosphate pyrophosphatase that hydrolyzes dTTP and UTP. May have a dual role in cell division arrest and in preventing the incorporation of modified nucleotides into cellular nucleic acids. The sequence is that of dTTP/UTP pyrophosphatase from Pseudomonas fluorescens (strain Pf0-1).